The chain runs to 382 residues: UDP-N-acetylenolpyruvoylglucosamine reductase (382 aa).

Residues 50-253 (RVGGPAVLAE…REAVLRLRAS (204 aa)) enclose the FAD-binding PCMH-type domain. Residue Arg-193 is part of the active site. The Proton donor role is filled by Ser-270. Residue Glu-374 is part of the active site.

The protein belongs to the MurB family. FAD serves as cofactor.

The protein localises to the cytoplasm. The enzyme catalyses UDP-N-acetyl-alpha-D-muramate + NADP(+) = UDP-N-acetyl-3-O-(1-carboxyvinyl)-alpha-D-glucosamine + NADPH + H(+). The protein operates within cell wall biogenesis; peptidoglycan biosynthesis. Functionally, cell wall formation. The sequence is that of UDP-N-acetylenolpyruvoylglucosamine reductase from Nocardia farcinica (strain IFM 10152).